We begin with the raw amino-acid sequence, 164 residues long: Protein-export protein SecB (164 aa).

It belongs to the SecB family. Homotetramer, a dimer of dimers. One homotetramer interacts with 1 SecA dimer.

It is found in the cytoplasm. One of the proteins required for the normal export of preproteins out of the cell cytoplasm. It is a molecular chaperone that binds to a subset of precursor proteins, maintaining them in a translocation-competent state. It also specifically binds to its receptor SecA. The chain is Protein-export protein SecB from Herminiimonas arsenicoxydans.